Here is a 341-residue protein sequence, read N- to C-terminus: Methionine import ATP-binding protein MetN 3 (341 aa).

Residues 2-241 form the ABC transporter domain; sequence ILLENVKKIY…PQQDITKRFV (240 aa). ATP is bound at residue 38-45; that stretch reads GYSGAGKS.

It belongs to the ABC transporter superfamily. Methionine importer (TC 3.A.1.24) family. The complex is composed of two ATP-binding proteins (MetN), two transmembrane proteins (MetI) and a solute-binding protein (MetQ).

The protein resides in the cell membrane. It carries out the reaction L-methionine(out) + ATP + H2O = L-methionine(in) + ADP + phosphate + H(+). The catalysed reaction is D-methionine(out) + ATP + H2O = D-methionine(in) + ADP + phosphate + H(+). In terms of biological role, part of the ABC transporter complex MetNIQ involved in methionine import. Responsible for energy coupling to the transport system. This is Methionine import ATP-binding protein MetN 3 from Bacillus cereus (strain ATCC 10987 / NRS 248).